The following is a 284-amino-acid chain: Nucleotide-binding protein Sputw3181_3461 (284 aa).

8–15 (GRSGSGKS) provides a ligand contact to ATP. 56 to 59 (DVRN) contributes to the GTP binding site.

It belongs to the RapZ-like family.

Displays ATPase and GTPase activities. In Shewanella sp. (strain W3-18-1), this protein is Nucleotide-binding protein Sputw3181_3461.